The chain runs to 216 residues: Pyridoxine/pyridoxamine 5'-phosphate oxidase 1 (216 aa).

Substrate is bound by residues arginine 10–tyrosine 13 and lysine 68. FMN is bound by residues arginine 63–lysine 68, tyrosine 78–threonine 79, lysine 85, and glutamine 107. Residues tyrosine 125, arginine 129, and serine 133 each contribute to the substrate site. Residues glutamine 142–serine 143 and tryptophan 186 contribute to the FMN site. Arginine 192–histidine 194 contributes to the substrate binding site. Arginine 196 is an FMN binding site.

Belongs to the pyridoxamine 5'-phosphate oxidase family. In terms of assembly, homodimer. FMN is required as a cofactor.

The enzyme catalyses pyridoxamine 5'-phosphate + O2 + H2O = pyridoxal 5'-phosphate + H2O2 + NH4(+). It catalyses the reaction pyridoxine 5'-phosphate + O2 = pyridoxal 5'-phosphate + H2O2. Its pathway is cofactor metabolism; pyridoxal 5'-phosphate salvage; pyridoxal 5'-phosphate from pyridoxamine 5'-phosphate: step 1/1. It participates in cofactor metabolism; pyridoxal 5'-phosphate salvage; pyridoxal 5'-phosphate from pyridoxine 5'-phosphate: step 1/1. In terms of biological role, catalyzes the oxidation of either pyridoxine 5'-phosphate (PNP) or pyridoxamine 5'-phosphate (PMP) into pyridoxal 5'-phosphate (PLP). This Hydrogenovibrio crunogenus (strain DSM 25203 / XCL-2) (Thiomicrospira crunogena) protein is Pyridoxine/pyridoxamine 5'-phosphate oxidase 1.